Consider the following 424-residue polypeptide: UPF0597 protein Ssed_2537 (424 aa).

The protein belongs to the UPF0597 family.

The sequence is that of UPF0597 protein Ssed_2537 from Shewanella sediminis (strain HAW-EB3).